The chain runs to 522 residues: Cytochrome P450 monooxygenase FGSG_08207 (522 aa).

A helical membrane pass occupies residues 10 to 30 (LLLSKPVVLGLAACALLFLIG). N-linked (GlcNAc...) asparagine glycans are attached at residues asparagine 104 and asparagine 155. Position 441 (cysteine 441) interacts with heme.

It belongs to the cytochrome P450 family. Heme is required as a cofactor.

It localises to the membrane. The protein operates within secondary metabolite biosynthesis. Functionally, cytochrome P450 monooxygenase; part of the gene cluster that mediates the biosynthesis of the lipopeptide fusaristatin A. Fusaristatin A consists of a polyketide chain linked to three amino acid residues glutamine (Gln), dehydroalanine (dehydro-Ala), and beta-aminoisobutyric acid. The biosynthesis starts with formation of a linear polyketide chain by the highly reducing polyketide synthase PKS6. The gene cluster does not contain an acyl-CoA ligase or an acyl-transferase, and it is therefore predicted that the polyketide is transferred directly to the nonribosomal peptide synthetase NRPS7. Modules 1-3 from NRPS7 incorporate dehydro-Ala, Gln, and beta-aminoisobutyric acid in the compound, which is released by cyclization. The beta-aminoisobutyric acid units are most likely not freely available to the NRPS, but can be synthesized from thymine, which requires a dehydrogenase, a monooxygenase, and an aminotransferase. The fusaristatin A cluster contains a cytochrome P450 monooxygenase (FGSG_08207) and an aminotransferase (FGSG_17085), which theoretically can perform two of the enzymatic steps. The enzymes may however also be involved in biosynthesis of dehydroalanine or modification of the polyketide. The dehydro-Ala residue can be a result of cyclization, where serine is dehydrated. The last gene of the cluster encodes a protein with an A/B barrel domain found in variable enzymes, which hampers functional prediction. This Gibberella zeae (strain ATCC MYA-4620 / CBS 123657 / FGSC 9075 / NRRL 31084 / PH-1) (Wheat head blight fungus) protein is Cytochrome P450 monooxygenase FGSG_08207.